We begin with the raw amino-acid sequence, 294 residues long: MAIFTGAGVAIVTPFKENREVNYEKLGELIDFQINNGTDSIIICGTTGESSTLTHEEHIECIRFAIEYTKKRVPVIAGTGSNCTETAIYLSKEAQVAGADAVLLVTPYYNKATQKGLIEHFTAIAKSIDLPVMLYNVPSRTGCNILPGTAATLVNTVDNIVAMKEASSNIAQVAELAHTCEGKLDIYSGCDDSIVPVMSLGGLGVVSVLSNIAPRQTHDIVAKFLEGDTKGSLDLQLEYLPVINALFSEVNPIPVKKALNLMGFEVGPLRSPLTEMEDAHAKILADEMKKVGLI.

T47 is a pyruvate binding site. Y135 serves as the catalytic Proton donor/acceptor. K164 serves as the catalytic Schiff-base intermediate with substrate. Pyruvate is bound at residue V206.

The protein belongs to the DapA family. As to quaternary structure, homotetramer; dimer of dimers.

It is found in the cytoplasm. It catalyses the reaction L-aspartate 4-semialdehyde + pyruvate = (2S,4S)-4-hydroxy-2,3,4,5-tetrahydrodipicolinate + H2O + H(+). It participates in amino-acid biosynthesis; L-lysine biosynthesis via DAP pathway; (S)-tetrahydrodipicolinate from L-aspartate: step 3/4. In terms of biological role, catalyzes the condensation of (S)-aspartate-beta-semialdehyde [(S)-ASA] and pyruvate to 4-hydroxy-tetrahydrodipicolinate (HTPA). The protein is 4-hydroxy-tetrahydrodipicolinate synthase of Lachnoclostridium phytofermentans (strain ATCC 700394 / DSM 18823 / ISDg) (Clostridium phytofermentans).